Consider the following 178-residue polypeptide: ATP synthase subunit delta (178 aa).

Belongs to the ATPase delta chain family. As to quaternary structure, F-type ATPases have 2 components, F(1) - the catalytic core - and F(0) - the membrane proton channel. F(1) has five subunits: alpha(3), beta(3), gamma(1), delta(1), epsilon(1). F(0) has three main subunits: a(1), b(2) and c(10-14). The alpha and beta chains form an alternating ring which encloses part of the gamma chain. F(1) is attached to F(0) by a central stalk formed by the gamma and epsilon chains, while a peripheral stalk is formed by the delta and b chains.

Its subcellular location is the cell inner membrane. In terms of biological role, f(1)F(0) ATP synthase produces ATP from ADP in the presence of a proton or sodium gradient. F-type ATPases consist of two structural domains, F(1) containing the extramembraneous catalytic core and F(0) containing the membrane proton channel, linked together by a central stalk and a peripheral stalk. During catalysis, ATP synthesis in the catalytic domain of F(1) is coupled via a rotary mechanism of the central stalk subunits to proton translocation. This protein is part of the stalk that links CF(0) to CF(1). It either transmits conformational changes from CF(0) to CF(1) or is implicated in proton conduction. The protein is ATP synthase subunit delta of Marinomonas sp. (strain MWYL1).